The chain runs to 662 residues: Protein Aster-C (662 aa).

The disordered stretch occupies residues 1-34 (MEGAPTVRQVMNEGDSSLATDLQEDVEENPSPTV). The region spanning 69-136 (EEYRRQFTHL…KNITFMTKEK (68 aa)) is the GRAM domain. Disordered regions lie at residues 212–237 (SIEDVQPRSPGRSSLDDSGERDEKLS) and 249–284 (RVSETESFDGNSSKGGLGKEESQNEKQTKKSLLPTL). The span at 265-276 (LGKEESQNEKQT) shows a compositional bias: basic and acidic residues. The VASt domain occupies 326–497 (HGRLFINRIF…DLLIEESVLN (172 aa)). Residues 557–577 (LIVVMSIFVLLLVLLNVTLFL) form a helical membrane-spanning segment.

The protein localises to the endoplasmic reticulum membrane. It localises to the cell membrane. Functionally, cholesterol transporter that mediates non-vesicular transport of cholesterol from the plasma membrane (PM) to the endoplasmic reticulum (ER). Contains unique domains for binding cholesterol and the PM, thereby serving as a molecular bridge for the transfer of cholesterol from the PM to the ER. Plays a crucial role in cholesterol homeostasis and has the unique ability to localize to the PM based on the level of membrane cholesterol. In lipid-poor conditions localizes to the ER membrane and in response to excess cholesterol in the PM is recruited to the endoplasmic reticulum-plasma membrane contact sites (EPCS) which is mediated by the GRAM domain. At the EPCS, the sterol-binding VASt/ASTER domain binds to the cholesterol in the PM and facilitates its transfer from the PM to ER. This chain is Protein Aster-C (GRAMD1C), found in Homo sapiens (Human).